Consider the following 115-residue polypeptide: Large ribosomal subunit protein bL19 (115 aa).

This sequence belongs to the bacterial ribosomal protein bL19 family.

Its function is as follows. This protein is located at the 30S-50S ribosomal subunit interface and may play a role in the structure and function of the aminoacyl-tRNA binding site. This Sodalis glossinidius (strain morsitans) protein is Large ribosomal subunit protein bL19.